Reading from the N-terminus, the 556-residue chain is Inositol 1,4,5-trisphosphate receptor-interacting protein (556 aa).

The first 15 residues, 1–15, serve as a signal peptide directing secretion; it reads MALGLFRVCLVVVTA. The Extracellular segment spans residues 16-88; the sequence is IINHPLLFPR…EGQQQNESRT (73 aa). Asn-27 and Asn-84 each carry an N-linked (GlcNAc...) asparagine glycan. Positions 32 to 87 form a coiled coil; the sequence is ENEEEIIRQMQAHQEKLQLEQLRLEEEMARLAADKEAEKEALERVAEEGQQQNESR. Residues 89-107 traverse the membrane as a helical segment; the sequence is AWDLWSTLCMILFLVIEVW. Over 108-556 the chain is Cytoplasmic; that stretch reads RQDHQDAPSP…ASLPPKTVIL (449 aa).

This sequence belongs to the ITPRIP family. As to quaternary structure, interacts with ITPR.

Its subcellular location is the cell membrane. The protein localises to the nucleus outer membrane. Functionally, enhances Ca(2+)-mediated inhibition of inositol 1,4,5-triphosphate receptor (ITPR) Ca(2+) release. The protein is Inositol 1,4,5-trisphosphate receptor-interacting protein (ITPRIP) of Bos taurus (Bovine).